The chain runs to 133 residues: MKLLYCLLLVILALVGLSSGAKPSDKLQIGVKYRPDECTVKTKSGDKLKIHYTGTLLNGDKFDSSVDRGTPFEFKIGVGQVIKGWDQGVLGMCVGEKRKLIIPPSLGYGQQGAGDKIPGNSHLIFDVELIGIN.

The first 20 residues, 1 to 20 (MKLLYCLLLVILALVGLSSG), serve as a signal peptide directing secretion. Positions 45–133 (GDKLKIHYTG…IFDVELIGIN (89 aa)) constitute a PPIase FKBP-type domain.

This sequence belongs to the FKBP-type PPIase family.

The enzyme catalyses [protein]-peptidylproline (omega=180) = [protein]-peptidylproline (omega=0). Inhibited by both FK506 and rapamycin. In terms of biological role, PPIases accelerate the folding of proteins by catalyzing the cis-trans isomerization of proline imidic peptide bonds in oligopeptides. The protein is FK506-binding protein 2 (fkbp2) of Dictyostelium discoideum (Social amoeba).